The chain runs to 576 residues: MNIFNQLKQDIIVASRQLYNNQEIANTATIEIPKDSFNGDLSSNIAMIIAAKESIAPREVALKFKEVLITLPYIASIEIAGPGFINFTIKADSWQASIKDILQHEEKFFEIDIDKSRNINIEYVSANPTGPMHIGHARGAVYGDVLARILQKVSYSVTKEYYVNDAGSQINDLVSTVLLRYKEALGEQITIPAGLYPGEYLIPLGQILAKEYGNKLLTMNYAERFKIIKSFAVEKMLDLNRKDLADLGIKHDIFFSEQSLHDKGEIEETVKLLERMGLIYEGTLPAPKGKIHEEWDNRVQKLFKSTKYGDSQDRPIEKADGSWSYFASDLAYAKDKIERGANHLIYVLGADHSGYVKRIEAIVKALGKEQVKVDVKICQLVNFVENGVPVKMSKRLGSFASVQDVNHEVGKDIIRFMMLTRQNDKPLDFDLVKVKEQSRENPIFYVQYAHVRTISILSKAKELMPESYNNFESGKYDLSLLSSEEEIEIIKLLASWTKTLEASAKYFEPHRIAFYLINLASKFHSMWNFGKENSDYRFVIESNKELTLARLALASAIQKVIASGLEVIGVEPMNKM.

Positions 128–136 (PTGPMHIGH) match the 'HIGH' region motif.

Belongs to the class-I aminoacyl-tRNA synthetase family. Monomer.

It is found in the cytoplasm. The enzyme catalyses tRNA(Arg) + L-arginine + ATP = L-arginyl-tRNA(Arg) + AMP + diphosphate. The protein is Arginine--tRNA ligase of Rickettsia conorii (strain ATCC VR-613 / Malish 7).